We begin with the raw amino-acid sequence, 339 residues long: Annexin A2 (339 aa).

The residue at position 2 (S2) is an N-acetylserine. The interval 2-24 (STVHEILCKLSLEGDHSTPPSAY) is S100A10-binding site. Y24 bears the Phosphotyrosine; by SRC mark. S26 carries the phosphoserine; by PKC modification. 2 Annexin repeats span residues 33–104 (FDAE…GLLK) and 105–176 (TPAQ…ALAK). At K49 the chain carries N6-acetyllysine; alternate. A Glycyl lysine isopeptide (Lys-Gly) (interchain with G-Cter in SUMO1); alternate cross-link involves residue K49. K49 participates in a covalent cross-link: Glycyl lysine isopeptide (Lys-Gly) (interchain with G-Cter in SUMO2); alternate. Residue K152 is modified to N6-acetyllysine. S184 is modified (phosphoserine). 2 Annexin repeats span residues 189 to 261 (ELID…NLVQ) and 265 to 336 (NKPL…YLCG). Y199 is modified (phosphotyrosine). At K227 the chain carries N6-acetyllysine.

The protein belongs to the annexin family. In terms of assembly, heterotetramer containing 2 light chains of S100A10/p11 and 2 heavy chains of ANXA2/p36. Interacts with ATP1B1. Interacts with DYSF. Interacts with COCH. Interacts (via repeat Annexin 1) with PCSK9 (via the C-terminal domain); the interaction inhibits the degradation of LDLR. Interacts with CEACAM1 (via the cytoplasmic domain); this interaction is regulated by phosphorylation of CEACAM1. Interacts with APPL2 and APPL1; targets APPL2 to endosomes and acting in parallel to RAB5A. Interacts with S100A4. May interact with UBAP2. Post-translationally, ISGylated. As to expression, expressed strongly in velvet antler reserve mesenchyme.

Its subcellular location is the secreted. The protein resides in the extracellular space. It is found in the extracellular matrix. It localises to the basement membrane. Its function is as follows. Calcium-regulated membrane-binding protein whose affinity for calcium is greatly enhanced by anionic phospholipids. It binds two calcium ions with high affinity. May be involved in heat-stress response. Inhibits PCSK9-enhanced LDLR degradation, probably reduces PCSK9 protein levels via a translational mechanism but also competes with LDLR for binding with PCSK9. Binds to endosomes damaged by phagocytosis of particulate wear debris and participates in endosomal membrane stabilization, thereby limiting NLRP3 inflammasome activation. Required for endothelial cell surface plasmin generation and may support fibrinolytic surveillance and neoangiogenesis. The protein is Annexin A2 (ANXA2) of Cervus elaphus (Red deer).